The following is a 203-amino-acid chain: Nascent polypeptide-associated complex subunit alpha (203 aa).

Residues 1 to 19 (MADPRIEELPDEEVPKTNV) show a composition bias toward basic and acidic residues. Residues 1-45 (MADPRIEELPDEEVPKTNVEDAADSSESEAGEEPTIPGGAAVTIH) are disordered. The span at 21 to 32 (DAADSSESEAGE) shows a compositional bias: acidic residues. The region spanning 46–111 (SRNEKKARKA…AKIEDLNSQA (66 aa)) is the NAC-A/B domain. The disordered stretch occupies residues 118-167 (QLAAAEAAGEHAGHDHDHDKGKGKAPETEAKKEEEEDDGEEVDETGLEPK). Residues 125-150 (AGEHAGHDHDHDKGKGKAPETEAKKE) show a composition bias toward basic and acidic residues. Over residues 151 to 163 (EEEDDGEEVDETG) the composition is skewed to acidic residues. Residues 164–203 (LEPKDIDLVMAQANVSRKKAVKALRENDNDIVNSIMALSI) form the UBA domain.

It belongs to the NAC-alpha family. As to quaternary structure, part of the nascent polypeptide-associated complex (NAC), consisting of egd2 and egd1. NAC associates with ribosomes via egd1.

The protein localises to the cytoplasm. The protein resides in the nucleus. Functionally, component of the nascent polypeptide-associated complex (NAC), a dynamic component of the ribosomal exit tunnel, protecting the emerging polypeptides from interaction with other cytoplasmic proteins to ensure appropriate nascent protein targeting. The NAC complex also promotes mitochondrial protein import by enhancing productive ribosome interactions with the outer mitochondrial membrane and blocks the inappropriate interaction of ribosomes translating non-secretory nascent polypeptides with translocation sites in the membrane of the endoplasmic reticulum. Egd2 may also be involved in transcription regulation. In Emericella nidulans (strain FGSC A4 / ATCC 38163 / CBS 112.46 / NRRL 194 / M139) (Aspergillus nidulans), this protein is Nascent polypeptide-associated complex subunit alpha (egd2).